The primary structure comprises 127 residues: Large ribosomal subunit protein bL21 (127 aa).

Belongs to the bacterial ribosomal protein bL21 family. Part of the 50S ribosomal subunit. Contacts protein L20.

This protein binds to 23S rRNA in the presence of protein L20. In Synechococcus sp. (strain ATCC 27144 / PCC 6301 / SAUG 1402/1) (Anacystis nidulans), this protein is Large ribosomal subunit protein bL21.